Reading from the N-terminus, the 343-residue chain is Aspartate carbamoyltransferase catalytic subunit (343 aa).

Carbamoyl phosphate contacts are provided by Arg-91 and Thr-92. L-aspartate is bound at residue Lys-119. Residues Arg-141, His-171, and Gln-174 each coordinate carbamoyl phosphate. Arg-204 and Arg-259 together coordinate L-aspartate. 2 residues coordinate carbamoyl phosphate: Gly-300 and Pro-301.

The protein belongs to the aspartate/ornithine carbamoyltransferase superfamily. ATCase family. In terms of assembly, heterododecamer (2C3:3R2) of six catalytic PyrB chains organized as two trimers (C3), and six regulatory PyrI chains organized as three dimers (R2).

It catalyses the reaction carbamoyl phosphate + L-aspartate = N-carbamoyl-L-aspartate + phosphate + H(+). Its pathway is pyrimidine metabolism; UMP biosynthesis via de novo pathway; (S)-dihydroorotate from bicarbonate: step 2/3. Its function is as follows. Catalyzes the condensation of carbamoyl phosphate and aspartate to form carbamoyl aspartate and inorganic phosphate, the committed step in the de novo pyrimidine nucleotide biosynthesis pathway. This is Aspartate carbamoyltransferase catalytic subunit from Burkholderia vietnamiensis (strain G4 / LMG 22486) (Burkholderia cepacia (strain R1808)).